Consider the following 932-residue polypeptide: Lon protease homolog 2, peroxisomal (932 aa).

In terms of domain architecture, Lon N-terminal spans 11–259 (LALVPLPKGS…RVVELLARQV (249 aa)). The disordered stretch occupies residues 304 to 340 (TGLTPPGAAGGRNNEDEKETNEVDELQKRLQEAELSP). Basic and acidic residues predominate over residues 328–340 (ELQKRLQEAELSP). 486–493 (GPPGTGKT) provides a ligand contact to ATP. One can recognise a Lon proteolytic domain in the interval 729–916 (HGRPGVVTGL…WEAIRQVWPG (188 aa)). Residues S822 and K865 contribute to the active site. The Microbody targeting signal motif lies at 930-932 (SRL).

It belongs to the peptidase S16 family.

It is found in the peroxisome matrix. It catalyses the reaction Hydrolysis of proteins in presence of ATP.. Functionally, ATP-dependent serine protease that mediates the selective degradation of misfolded and unassembled polypeptides in the peroxisomal matrix. Necessary for type 2 peroxisome targeting signal (PTS2)-containing protein processing and facilitates peroxisome matrix protein import. This Aspergillus fumigatus (strain ATCC MYA-4609 / CBS 101355 / FGSC A1100 / Af293) (Neosartorya fumigata) protein is Lon protease homolog 2, peroxisomal.